The chain runs to 345 residues: uncharacterized protein (345 aa).

The 198-residue stretch at 1–198 (MDVLSAVLLA…LSEGLLDHEE (198 aa)) folds into the CNNM transmembrane domain. Transmembrane regions (helical) follow at residues 3-23 (VLSA…FVGA) and 95-115 (VPPA…HVLL). 2 CBS domains span residues 217–280 (AVPL…PQTV) and 285–342 (VVRP…MRDG). The chain crosses the membrane as a helical span at residues 312–332 (LALVTADNGSVVGMVALEDVV).

Belongs to the TerC family.

The protein resides in the cell membrane. This is an uncharacterized protein from Mycobacterium tuberculosis (strain CDC 1551 / Oshkosh).